The chain runs to 493 residues: Inosine-5'-monophosphate dehydrogenase (493 aa).

2 CBS domains span residues 97 to 155 (VIID…NAPI) and 159 to 219 (MTSE…AKDE). Residues aspartate 253 and 303–305 (GIG) each bind NAD(+). The K(+) site is built by glycine 305 and glycine 307. Serine 308 serves as a coordination point for IMP. Cysteine 310 contributes to the K(+) binding site. Cysteine 310 (thioimidate intermediate) is an active-site residue. IMP contacts are provided by residues 343–345 (DGG), 366–367 (GS), and 390–394 (YRGMG). The active-site Proton acceptor is arginine 406. Residue glutamate 421 coordinates IMP. Glutamate 475, serine 476, and histidine 477 together coordinate K(+).

Belongs to the IMPDH/GMPR family. Homotetramer. K(+) serves as cofactor.

The enzyme catalyses IMP + NAD(+) + H2O = XMP + NADH + H(+). It functions in the pathway purine metabolism; XMP biosynthesis via de novo pathway; XMP from IMP: step 1/1. With respect to regulation, mycophenolic acid (MPA) is a non-competitive inhibitor that prevents formation of the closed enzyme conformation by binding to the same site as the amobile flap. In contrast, mizoribine monophosphate (MZP) is a competitive inhibitor that induces the closed conformation. MPA is a potent inhibitor of mammalian IMPDHs but a poor inhibitor of the bacterial enzymes. MZP is a more potent inhibitor of bacterial IMPDH. Functionally, catalyzes the conversion of inosine 5'-phosphate (IMP) to xanthosine 5'-phosphate (XMP), the first committed and rate-limiting step in the de novo synthesis of guanine nucleotides, and therefore plays an important role in the regulation of cell growth. This is Inosine-5'-monophosphate dehydrogenase from Streptococcus pyogenes serotype M3 (strain ATCC BAA-595 / MGAS315).